Consider the following 294-residue polypeptide: Nucleophosmin (294 aa).

Met-1 carries the post-translational modification N-acetylmethionine. The necessary for interaction with APEX1 stretch occupies residues 1–117 (MEDSMDMDMS…PVHISGQHLV (117 aa)). Residues 1–186 (MEDSMDMDMS…DDDDFDDEEA (186 aa)) form a required for interaction with SENP3 region. At Ser-4 the chain carries Phosphoserine; by PLK1 and PLK2. Ser-10 carries the post-translational modification Phosphoserine. Lys-27 is covalently cross-linked (Glycyl lysine isopeptide (Lys-Gly) (interchain with G-Cter in SUMO2)). Residue Lys-32 is modified to N6-acetyllysine; alternate. A Glycyl lysine isopeptide (Lys-Gly) (interchain with G-Cter in SUMO1); alternate cross-link involves residue Lys-32. Lys-32 participates in a covalent cross-link: Glycyl lysine isopeptide (Lys-Gly) (interchain with G-Cter in SUMO2); alternate. Ser-43 is modified (phosphoserine). At Tyr-67 the chain carries Phosphotyrosine. Ser-70 is modified (phosphoserine). Phosphothreonine occurs at positions 75 and 95. Residues 120-132 (EEDAESEDEEEED) are compositionally biased toward acidic residues. The tract at residues 120-247 (EEDAESEDEE…PKGPSSVEDI (128 aa)) is disordered. Ser-125 is modified (phosphoserine; by CDK2). Ser-137 and Ser-139 each carry phosphoserine. A Glycyl lysine isopeptide (Lys-Gly) (interchain with G-Cter in SUMO2) cross-link involves residue Lys-141. Position 150 is an N6-acetyllysine; alternate (Lys-150). Lys-150 is covalently cross-linked (Glycyl lysine isopeptide (Lys-Gly) (interchain with G-Cter in SUMO2); alternate). Positions 152–157 (PQKKVK) match the Nuclear localization signal motif. At Lys-154 the chain carries N6-acetyllysine. Over residues 161–187 (DEDDDDDDEEDDDEDDDDDDFDDEEAE) the composition is skewed to acidic residues. The interval 187 to 215 (EEKAPVKKSIRDTPAKNAQKSNQNGKDSK) is interaction with NOP2. The span at 188–200 (EKAPVKKSIRDTP) shows a compositional bias: basic and acidic residues. The Nuclear localization signal signature appears at 191-197 (PVKKSIR). Residue Thr-199 is modified to Phosphothreonine; by CDK1, CDK2 and CDK6. Positions 202 to 222 (KNAQKSNQNGKDSKPSSTPRS) are enriched in polar residues. Ser-207 is modified (ADP-ribosylserine). Lys-212 bears the N6-acetyllysine mark. Lys-215 participates in a covalent cross-link: Glycyl lysine isopeptide (Lys-Gly) (interchain with G-Cter in SUMO2). Thr-219 is modified (phosphothreonine; by CDK1). Positions 223 to 235 (KGQESFKKQEKTP) are enriched in basic and acidic residues. At Ser-227 the chain carries Phosphoserine. Lys-229 is modified (N6-acetyllysine). Lys-230 bears the N6-acetyllysine; alternate mark. A Glycyl lysine isopeptide (Lys-Gly) (interchain with G-Cter in SUMO); alternate cross-link involves residue Lys-230. Thr-234 and Thr-237 each carry phosphothreonine; by CDK1. A phosphoserine mark is found at Ser-242 and Ser-243. Positions 243-294 (SVEDIKAKMQASIEKGGSLPKVEAKFINYVKNCFRMTDQEAIQDLWQWRKSL) are required for nucleolar localization. Lys-248 participates in a covalent cross-link: Glycyl lysine isopeptide (Lys-Gly) (interchain with G-Cter in SUMO1); alternate. Glycyl lysine isopeptide (Lys-Gly) (interchain with G-Cter in SUMO2); alternate cross-links involve residues Lys-248 and Lys-250. Lys-250 bears the N6-acetyllysine; alternate mark. Ser-254 bears the Phosphoserine mark. At Lys-257 the chain carries N6-acetyllysine; alternate. A Glycyl lysine isopeptide (Lys-Gly) (interchain with G-Cter in SUMO1); alternate cross-link involves residue Lys-257. Lys-257 is covalently cross-linked (Glycyl lysine isopeptide (Lys-Gly) (interchain with G-Cter in SUMO2); alternate). Lys-257 is modified (N6-acetyllysine). The residue at position 260 (Ser-260) is a Phosphoserine. Residues Lys-263, Lys-267, and Lys-273 each participate in a glycyl lysine isopeptide (Lys-Gly) (interchain with G-Cter in SUMO2); alternate cross-link. Residue Lys-263 forms a Glycyl lysine isopeptide (Lys-Gly) (interchain with G-Cter in SUMO); alternate linkage. An N6-acetyllysine; alternate mark is found at Lys-267 and Lys-273. Lys-267 participates in a covalent cross-link: Glycyl lysine isopeptide (Lys-Gly) (interchain with G-Cter in SUMO1); alternate. Lys-267 bears the N6-succinyllysine; alternate mark. Thr-279 bears the Phosphothreonine mark. Lys-292 is modified (N6-acetyllysine).

This sequence belongs to the nucleoplasmin family. In terms of assembly, decamer formed by two pentameric rings associated in a head-to-head fashion. Disulfide-linked dimers under certain conditions. The SWAP complex consists of NPM1, NCL, PARP1 and SWAP70. Interacts with NSUN2 and SENP3. Interacts with the methylated form of RPS10. Interacts (via N-terminal domain) with APEX1; the interaction is RNA-dependent and decreases in hydrogen peroxide-damaged cells. Interacts with isoform 1 of NEK2. Interacts with ROCK2 and BRCA2. Interacts with RPGR. Interacts with CENPW. Interacts with EIF2AK2/PKR. Interacts with CEBPA (isoform 4). Interacts with DDX31; this interaction prevents interaction between NPM1 and HDM2. Interacts with MYC; competitive with NOP53. Interacts with NOP53; the interaction is direct and competitive with MYC. Interacts with LRRC34. Interacts with RRP1B. Interacts with NPM3. Interacts with ALKBH2. Interacts with TTF1 (via C-terminal region). Interacts with NOP2. Interacts with ARID3C (via REKLES DOMAIN); the interaction mediates ARID3C nuclear shuttling. As to quaternary structure, (Microbial infection) Interacts with hepatitis delta virus S-HDAg. (Microbial infection) Interacts with HTLV1 Rex protein (via N-terminal nuclear localization signal). Post-translationally, acetylated at C-terminal lysine residues, thereby increasing affinity to histones. In terms of processing, ADP-ribosylated. Phosphorylated at Ser-4 by PLK1 and PLK2. Phosphorylation at Ser-4 by PLK2 in S phase is required for centriole duplication and is sufficient to trigger centriole replication. Phosphorylation at Ser-4 by PLK1 takes place during mitosis. Phosphorylated by CDK2 at Ser-125 and Thr-199. Phosphorylation at Thr-199 may trigger initiation of centrosome duplication. Phosphorylated by CDK1 at Thr-199, Thr-219, Thr-234 and Thr-237 during cell mitosis. When these four sites are phosphorated, RNA-binding activity seem to be abolished. May be phosphorylated at Ser-70 by NEK2. The Thr-199 phosphorylated form has higher affinity for ROCK2. CDK6 triggers Thr-199 phosphorylation when complexed to Kaposi's sarcoma herpesvirus (KSHV) V-cyclin, leading to viral reactivation by reducing viral LANA levels. Post-translationally, sumoylated by ARF. In terms of processing, ubiquitinated. Ubiquitination leads to proteasomal degradation. Deubiquitinated by USP36.

The protein resides in the nucleus. It is found in the nucleolus. The protein localises to the nucleoplasm. Its subcellular location is the cytoplasm. It localises to the cytoskeleton. The protein resides in the microtubule organizing center. It is found in the centrosome. In terms of biological role, involved in diverse cellular processes such as ribosome biogenesis, centrosome duplication, protein chaperoning, histone assembly, cell proliferation, and regulation of tumor suppressors p53/TP53 and ARF. Binds ribosome presumably to drive ribosome nuclear export. Associated with nucleolar ribonucleoprotein structures and bind single-stranded nucleic acids. Acts as a chaperonin for the core histones H3, H2B and H4. Stimulates APEX1 endonuclease activity on apurinic/apyrimidinic (AP) double-stranded DNA but inhibits APEX1 endonuclease activity on AP single-stranded RNA. May exert a control of APEX1 endonuclease activity within nucleoli devoted to repair AP on rDNA and the removal of oxidized rRNA molecules. In concert with BRCA2, regulates centrosome duplication. Regulates centriole duplication: phosphorylation by PLK2 is able to trigger centriole replication. Negatively regulates the activation of EIF2AK2/PKR and suppresses apoptosis through inhibition of EIF2AK2/PKR autophosphorylation. Antagonizes the inhibitory effect of ATF5 on cell proliferation and relieves ATF5-induced G2/M blockade. In complex with MYC enhances the transcription of MYC target genes. May act as chaperonin or cotransporter in the nucleolar localization of transcription termination factor TTF1. The sequence is that of Nucleophosmin from Homo sapiens (Human).